The sequence spans 345 residues: Methionine import ATP-binding protein MetN (345 aa).

The ABC transporter domain maps to 2–241 (IKLKNISKVF…PKTLLAQEFI (240 aa)). ATP is bound at residue 38-45 (GASGAGKS).

The protein belongs to the ABC transporter superfamily. Methionine importer (TC 3.A.1.24) family. As to quaternary structure, the complex is composed of two ATP-binding proteins (MetN), two transmembrane proteins (MetI) and a solute-binding protein (MetQ).

The protein resides in the cell inner membrane. The enzyme catalyses L-methionine(out) + ATP + H2O = L-methionine(in) + ADP + phosphate + H(+). It catalyses the reaction D-methionine(out) + ATP + H2O = D-methionine(in) + ADP + phosphate + H(+). Its function is as follows. Part of the ABC transporter complex MetNIQ involved in methionine import. Responsible for energy coupling to the transport system. The polypeptide is Methionine import ATP-binding protein MetN (Histophilus somni (strain 129Pt) (Haemophilus somnus)).